Consider the following 436-residue polypeptide: Adenylosuccinate synthetase (436 aa).

GTP contacts are provided by residues 21–27 (GDEGKGK) and 49–51 (GHT). D22 (proton acceptor) is an active-site residue. Residues D22 and G49 each contribute to the Mg(2+) site. IMP is bound by residues 22–25 (DEGK), 47–50 (NAGH), T135, R149, Q230, T245, and R309. H50 serves as the catalytic Proton donor. 305–311 (TTTGRPR) is a binding site for substrate. Residues R311, 337–339 (KVD), and 423–425 (SSG) each bind GTP.

Belongs to the adenylosuccinate synthetase family. As to quaternary structure, homodimer. Requires Mg(2+) as cofactor.

It is found in the cytoplasm. It catalyses the reaction IMP + L-aspartate + GTP = N(6)-(1,2-dicarboxyethyl)-AMP + GDP + phosphate + 2 H(+). It functions in the pathway purine metabolism; AMP biosynthesis via de novo pathway; AMP from IMP: step 1/2. Its function is as follows. Plays an important role in the de novo pathway of purine nucleotide biosynthesis. Catalyzes the first committed step in the biosynthesis of AMP from IMP. The sequence is that of Adenylosuccinate synthetase from Thermoplasma volcanium (strain ATCC 51530 / DSM 4299 / JCM 9571 / NBRC 15438 / GSS1).